The following is a 388-amino-acid chain: Putative nickel insertion protein (388 aa).

Belongs to the LarC family.

The sequence is that of Putative nickel insertion protein from Syntrophobacter fumaroxidans (strain DSM 10017 / MPOB).